The sequence spans 1444 residues: Adhesin P1 (1444 aa).

An N-terminal signal peptide occupies residues 1–30; sequence MHQPKKRLAKKSWAFLTAALTLGVITGVGG. Disordered regions lie at residues 231-283, 845-885, and 927-949; these read QSSF…EVER, IPFE…ALPN, and GDSN…TNEG. A compositionally biased stretch (basic and acidic residues) spans 240–257; sequence LQKDSPVKDSSKQGEKLS. Positions 258–272 are enriched in low complexity; it reads ETTASSMSSGMATST. 2 stretches are compositionally biased toward polar residues: residues 851–860 and 868–878; these read KPSNNSTPFD and VTPSGGSSKPT. Over residues 933–946 the composition is skewed to basic and acidic residues; that stretch reads FNKDSEQKWDKTET. The chain crosses the membrane as a helical span at residues 1353–1373; the sequence is VLPLIVTVPIVVIILSVTLGL. A disordered region spans residues 1419-1444; the sequence is NAPKKLKQATPTKPTPKTPPKPPVKQ. Over residues 1431-1444 the composition is skewed to pro residues; sequence KPTPKTPPKPPVKQ.

The protein belongs to the adhesin P1 family.

It is found in the cell membrane. In terms of biological role, the protein is the major adhesin mediating the attachment of this mycoplasma to the ciliated epithelium. This chain is Adhesin P1 (mgpA), found in Mycoplasma genitalium (strain ATCC 33530 / DSM 19775 / NCTC 10195 / G37) (Mycoplasmoides genitalium).